We begin with the raw amino-acid sequence, 208 residues long: Small ribosomal subunit protein uS2 (208 aa).

Belongs to the universal ribosomal protein uS2 family.

The protein is Small ribosomal subunit protein uS2 of Pyrobaculum calidifontis (strain DSM 21063 / JCM 11548 / VA1).